The primary structure comprises 61 residues: Large ribosomal subunit protein uL30 (61 aa).

Belongs to the universal ribosomal protein uL30 family. Part of the 50S ribosomal subunit.

This chain is Large ribosomal subunit protein uL30, found in Francisella philomiragia subsp. philomiragia (strain ATCC 25017 / CCUG 19701 / FSC 153 / O#319-036).